Consider the following 106-residue polypeptide: Protamine (106 aa).

The interval 1–106 (ARAVRRRRAR…TRRRRRRARR (106 aa)) is disordered.

In terms of tissue distribution, sperm.

The protein localises to the nucleus. It is found in the chromosome. This chain is Protamine, found in Phorcus turbinatus (Sea snail).